Consider the following 428-residue polypeptide: Serine--tRNA ligase (428 aa).

Position 231–233 (231–233 (TAE)) interacts with L-serine. Residue 262 to 264 (RSE) coordinates ATP. Residue Glu-285 coordinates L-serine. Residue 349-352 (EISS) participates in ATP binding. An L-serine-binding site is contributed by Ser-385.

The protein belongs to the class-II aminoacyl-tRNA synthetase family. Type-1 seryl-tRNA synthetase subfamily. As to quaternary structure, homodimer. The tRNA molecule binds across the dimer.

It localises to the cytoplasm. The enzyme catalyses tRNA(Ser) + L-serine + ATP = L-seryl-tRNA(Ser) + AMP + diphosphate + H(+). It carries out the reaction tRNA(Sec) + L-serine + ATP = L-seryl-tRNA(Sec) + AMP + diphosphate + H(+). It participates in aminoacyl-tRNA biosynthesis; selenocysteinyl-tRNA(Sec) biosynthesis; L-seryl-tRNA(Sec) from L-serine and tRNA(Sec): step 1/1. Functionally, catalyzes the attachment of serine to tRNA(Ser). Is also able to aminoacylate tRNA(Sec) with serine, to form the misacylated tRNA L-seryl-tRNA(Sec), which will be further converted into selenocysteinyl-tRNA(Sec). The polypeptide is Serine--tRNA ligase (Staphylococcus aureus (strain bovine RF122 / ET3-1)).